Here is a 559-residue protein sequence, read N- to C-terminus: Dihydroxy-acid dehydratase (559 aa).

Aspartate 81 serves as a coordination point for Mg(2+). Cysteine 122 is a binding site for [2Fe-2S] cluster. Residues aspartate 123 and lysine 124 each contribute to the Mg(2+) site. An N6-carboxylysine modification is found at lysine 124. Cysteine 195 is a binding site for [2Fe-2S] cluster. Mg(2+) is bound at residue glutamate 448. The Proton acceptor role is filled by serine 474.

The protein belongs to the IlvD/Edd family. In terms of assembly, homodimer. The cofactor is [2Fe-2S] cluster. It depends on Mg(2+) as a cofactor.

It carries out the reaction (2R)-2,3-dihydroxy-3-methylbutanoate = 3-methyl-2-oxobutanoate + H2O. The catalysed reaction is (2R,3R)-2,3-dihydroxy-3-methylpentanoate = (S)-3-methyl-2-oxopentanoate + H2O. The protein operates within amino-acid biosynthesis; L-isoleucine biosynthesis; L-isoleucine from 2-oxobutanoate: step 3/4. It functions in the pathway amino-acid biosynthesis; L-valine biosynthesis; L-valine from pyruvate: step 3/4. In terms of biological role, functions in the biosynthesis of branched-chain amino acids. Catalyzes the dehydration of (2R,3R)-2,3-dihydroxy-3-methylpentanoate (2,3-dihydroxy-3-methylvalerate) into 2-oxo-3-methylpentanoate (2-oxo-3-methylvalerate) and of (2R)-2,3-dihydroxy-3-methylbutanoate (2,3-dihydroxyisovalerate) into 2-oxo-3-methylbutanoate (2-oxoisovalerate), the penultimate precursor to L-isoleucine and L-valine, respectively. This is Dihydroxy-acid dehydratase from Geobacillus kaustophilus (strain HTA426).